The primary structure comprises 157 residues: 3-hydroxybutyryl-CoA dehydratase (157 aa).

Residues 22–120 (KKEISSSDVV…IPERRRARLA (99 aa)) form the MaoC-like domain.

The enzyme catalyses (3R)-3-hydroxybutanoyl-CoA = (2E)-butenoyl-CoA + H2O. Involved in the regeneration of glyoxylate from a molecule of acetyl-CoA. This is 3-hydroxybutyryl-CoA dehydratase from Methylorubrum extorquens (strain ATCC 14718 / DSM 1338 / JCM 2805 / NCIMB 9133 / AM1) (Methylobacterium extorquens).